The chain runs to 133 residues: Covalently-linked cell wall protein 12 (133 aa).

Residues methionine 1–alanine 18 form the signal peptide. The N-linked (GlcNAc...) asparagine glycan is linked to asparagine 21. Residues threonine 23, threonine 24, and threonine 26 are each glycosylated (O-linked (Man) threonine). Residues serine 28 and serine 31 are each glycosylated (O-linked (Man) serine). 4 O-linked (Man) threonine glycosylation sites follow: threonine 32, threonine 33, threonine 36, and threonine 38. Serine 39 and serine 46 each carry an O-linked (Man) serine glycan. Threonine 48 is a glycosylation site (O-linked (Man) threonine). 2 tandem repeats follow at residues threonine 75 to proline 88 and serine 91 to proline 103. Residues proline 79 to threonine 104 are disordered. A Glycyl lysine isopeptide (Lys-Gly) (interchain with G-Cter in ubiquitin) cross-link involves residue lysine 80. 2 N-linked (GlcNAc...) asparagine glycosylation sites follow: asparagine 81 and asparagine 97. Positions asparagine 81–threonine 104 are enriched in polar residues. Glycine 112 carries the GPI-anchor amidated glycine lipid modification. Residues alanine 113–leucine 133 constitute a propeptide, removed in mature form.

To yeast protein YDR134C. In terms of processing, extensively O-glycosylated; glycans consist probably of single mannose residues. N-glycosylated. Post-translationally, the GPI-anchor is attached to the protein in the endoplasmic reticulum and serves to target the protein to the cell surface. There, the glucosamine-inositol phospholipid moiety is cleaved off and the GPI-modified mannoprotein is covalently attached via its lipidless GPI glycan remnant to the 1,6-beta-glucan of the outer cell wall layer.

It is found in the secreted. The protein localises to the cell wall. The protein resides in the membrane. In terms of biological role, component of the cell wall. May play a role in the formation of a tightly packed outer mannan layer, which protects the inner glucan. This Saccharomyces cerevisiae (strain ATCC 204508 / S288c) (Baker's yeast) protein is Covalently-linked cell wall protein 12 (CCW12).